The primary structure comprises 524 residues: PiggyBac transposable element-derived protein 5 (524 aa).

Residues 30–117 are disordered; it reads DDVFGESGPD…DTGGPTRKMP (88 aa). Residues 47 to 59 show a composition bias toward low complexity; sequence STSAASRSSSAAS. Over residues 67–79 the composition is skewed to pro residues; it reads PGPPGAAPPPPRA. Residues 98 to 108 show a composition bias toward basic and acidic residues; that stretch reads LRDRPPPRFED. The residue at position 521 (S521) is a Phosphoserine.

It is found in the nucleus. Transposase that mediates sequence-specific genomic rearrangements. Can induce genomic rearrangements that inactivate the HPRT1 gene. The polypeptide is PiggyBac transposable element-derived protein 5 (PGBD5) (Homo sapiens (Human)).